The chain runs to 361 residues: Chorismate synthase (361 aa).

Residues R48 and R54 each contribute to the NADP(+) site. FMN is bound by residues 125-127, 238-239, G278, 293-297, and R319; these read RSS, NA, and KPTSS.

The protein belongs to the chorismate synthase family. As to quaternary structure, homotetramer. It depends on FMNH2 as a cofactor.

It carries out the reaction 5-O-(1-carboxyvinyl)-3-phosphoshikimate = chorismate + phosphate. It functions in the pathway metabolic intermediate biosynthesis; chorismate biosynthesis; chorismate from D-erythrose 4-phosphate and phosphoenolpyruvate: step 7/7. Its function is as follows. Catalyzes the anti-1,4-elimination of the C-3 phosphate and the C-6 proR hydrogen from 5-enolpyruvylshikimate-3-phosphate (EPSP) to yield chorismate, which is the branch point compound that serves as the starting substrate for the three terminal pathways of aromatic amino acid biosynthesis. This reaction introduces a second double bond into the aromatic ring system. This chain is Chorismate synthase, found in Pectobacterium atrosepticum (strain SCRI 1043 / ATCC BAA-672) (Erwinia carotovora subsp. atroseptica).